Reading from the N-terminus, the 370-residue chain is 3-isopropylmalate dehydrogenase (370 aa).

NAD(+) is bound at residue 77–90 (GPKWDSVPYEVRPE). Substrate contacts are provided by Arg-97, Arg-107, Arg-135, and Asp-226. Positions 226, 250, and 254 each coordinate Mg(2+). 290-302 (GSAPDIAGKGIAN) is a binding site for NAD(+).

The protein belongs to the isocitrate and isopropylmalate dehydrogenases family. LeuB type 1 subfamily. In terms of assembly, homodimer. It depends on Mg(2+) as a cofactor. The cofactor is Mn(2+).

It is found in the cytoplasm. The catalysed reaction is (2R,3S)-3-isopropylmalate + NAD(+) = 4-methyl-2-oxopentanoate + CO2 + NADH. The protein operates within amino-acid biosynthesis; L-leucine biosynthesis; L-leucine from 3-methyl-2-oxobutanoate: step 3/4. In terms of biological role, catalyzes the oxidation of 3-carboxy-2-hydroxy-4-methylpentanoate (3-isopropylmalate) to 3-carboxy-4-methyl-2-oxopentanoate. The product decarboxylates to 4-methyl-2 oxopentanoate. This Brucella suis biovar 1 (strain 1330) protein is 3-isopropylmalate dehydrogenase.